Consider the following 132-residue polypeptide: Small ribosomal subunit protein uS8 (132 aa).

The protein belongs to the universal ribosomal protein uS8 family. Part of the 30S ribosomal subunit. Contacts proteins S5 and S12.

Functionally, one of the primary rRNA binding proteins, it binds directly to 16S rRNA central domain where it helps coordinate assembly of the platform of the 30S subunit. The polypeptide is Small ribosomal subunit protein uS8 (Staphylococcus haemolyticus (strain JCSC1435)).